The chain runs to 540 residues: tRNA-2-methylthio-N(6)-dimethylallyladenosine synthase (540 aa).

The region spanning 41–157 (RTYEVRTFGC…LPTLLERSAH (117 aa)) is the MTTase N-terminal domain. Cys-50, Cys-86, Cys-120, Cys-194, Cys-198, and Cys-201 together coordinate [4Fe-4S] cluster. In terms of domain architecture, Radical SAM core spans 180 to 416 (RESAYSGWVS…IALQERIQAE (237 aa)). The TRAM domain maps to 419 to 486 (KELVGTTQEL…PFFLIADGPL (68 aa)).

Belongs to the methylthiotransferase family. MiaB subfamily. Monomer. [4Fe-4S] cluster serves as cofactor.

Its subcellular location is the cytoplasm. It catalyses the reaction N(6)-dimethylallyladenosine(37) in tRNA + (sulfur carrier)-SH + AH2 + 2 S-adenosyl-L-methionine = 2-methylsulfanyl-N(6)-dimethylallyladenosine(37) in tRNA + (sulfur carrier)-H + 5'-deoxyadenosine + L-methionine + A + S-adenosyl-L-homocysteine + 2 H(+). Catalyzes the methylthiolation of N6-(dimethylallyl)adenosine (i(6)A), leading to the formation of 2-methylthio-N6-(dimethylallyl)adenosine (ms(2)i(6)A) at position 37 in tRNAs that read codons beginning with uridine. This chain is tRNA-2-methylthio-N(6)-dimethylallyladenosine synthase, found in Corynebacterium urealyticum (strain ATCC 43042 / DSM 7109).